Reading from the N-terminus, the 95-residue chain is Large ribosomal subunit protein bL27 (95 aa).

The disordered stretch occupies residues 1–21 (MAHKKGASSSRNGRDSNAQRL). The segment covering 7-19 (ASSSRNGRDSNAQ) has biased composition (polar residues).

The protein belongs to the bacterial ribosomal protein bL27 family.

This is Large ribosomal subunit protein bL27 from Parafrankia sp. (strain EAN1pec).